A 414-amino-acid chain; its full sequence is Enterobactin exporter EntS (414 aa).

Over 1-21 (MNRQSWLLNLSLLKTHPAFRA) the chain is Cytoplasmic. Residues 22-42 (VFLARFISIVSLGLLGVAVPV) form a helical membrane-spanning segment. Topologically, residues 43–55 (QIQMMTHSTWQVG) are periplasmic. Residues 56 to 76 (LSVTLTGGAMFIGLMVGGVLA) traverse the membrane as a helical segment. At 77-83 (DRYERKK) the chain is on the cytoplasmic side. Residues 84–104 (VILLARGTCGIGFIGLCVNSL) traverse the membrane as a helical segment. Residues 105-109 (LPEPS) lie on the Periplasmic side of the membrane. The chain crosses the membrane as a helical span at residues 110–130 (LLAIYLLGLWDGFFASLGVTA). Residues 131–156 (LLAATPALVGRENLMQAGAITMLTVR) are Cytoplasmic-facing. A helical membrane pass occupies residues 157 to 177 (LGSVISPMLGGILLASGGVAW). A topological domain (periplasmic) is located at residue asparagine 178. A helical membrane pass occupies residues 179–199 (YGLAAAGTFITLLPLLTLPRL). At 200–218 (PVPPQPRENPFIALLAAFR) the chain is on the cytoplasmic side. A helical transmembrane segment spans residues 219–239 (FLLASPLIGGIALLGGLVTMA). Over 240 to 256 (SAVRVLYPALAMSWQMS) the chain is Periplasmic. The helical transmembrane segment at 257 to 277 (AAQIGLLYAAIPLGAAIGALT) threads the bilayer. At 278-287 (SGQLAHSVRP) the chain is on the cytoplasmic side. The chain crosses the membrane as a helical span at residues 288 to 307 (GLIMLVSTVGSFLAVGLFAI). At 308-313 (MPVWTA) the chain is on the periplasmic side. Residues 314 to 336 (GVICLALFGWLSAISSLLQYTLL) traverse the membrane as a helical segment. Residues 337–356 (QTQTPENMLGRMNGLWTAQN) lie on the Cytoplasmic side of the membrane. The chain crosses the membrane as a helical span at residues 357–377 (VTGDAIGAALLGGLGAMMTPV). A topological domain (periplasmic) is located at residue alanine 378. The chain crosses the membrane as a helical span at residues 379–399 (SASVSGFGLVIIGLLLLLVLG). Residues 400–414 (ELRRFRQTPPVSDAG) lie on the Cytoplasmic side of the membrane.

This sequence belongs to the major facilitator superfamily. EntS (TC 2.A.1.38) family.

The protein resides in the cell inner membrane. In terms of biological role, component of an export pathway for enterobactin. This chain is Enterobactin exporter EntS, found in Salmonella choleraesuis (strain SC-B67).